The chain runs to 340 residues: Phosphate acyltransferase (340 aa).

It belongs to the PlsX family. Homodimer. Probably interacts with PlsY.

It localises to the cytoplasm. The catalysed reaction is a fatty acyl-[ACP] + phosphate = an acyl phosphate + holo-[ACP]. It functions in the pathway lipid metabolism; phospholipid metabolism. Functionally, catalyzes the reversible formation of acyl-phosphate (acyl-PO(4)) from acyl-[acyl-carrier-protein] (acyl-ACP). This enzyme utilizes acyl-ACP as fatty acyl donor, but not acyl-CoA. This chain is Phosphate acyltransferase, found in Nitrosococcus oceani (strain ATCC 19707 / BCRC 17464 / JCM 30415 / NCIMB 11848 / C-107).